Reading from the N-terminus, the 350-residue chain is Casein kinase II subunit alpha' (350 aa).

Position 13 is a phosphotyrosine (Tyr13). Phosphoserine occurs at positions 18 and 21. In terms of domain architecture, Protein kinase spans 40-325; it reads YQLVRKLGRG…AKEAMEHPYF (286 aa). ATP is bound by residues 46-54 and Lys69; that span reads LGRGKYSEV. Lys97 carries the N6-acetyllysine modification. The active-site Proton acceptor is Asp157. Ser288 is modified (phosphoserine).

This sequence belongs to the protein kinase superfamily. Ser/Thr protein kinase family. CK2 subfamily. Heterotetramer composed of two catalytic subunits (alpha chain and/or alpha' chain) and two regulatory subunits (beta chains). The tetramer can exist as a combination of 2 alpha/2 beta, 2 alpha'/2 beta or 1 alpha/1 alpha'/2 beta subunits. Also part of a CK2-SPT16-SSRP1 complex composed of SSRP1, SUPT16H, CSNK2A1, CSNK2A2 and CSNK2B, which forms following UV irradiation. Interacts with RNPS1. Interacts with CSNK2A2IP (via C-terminus). Interacts with SIRT6; preventing CSNK2A2 localization to the nucleus. Interacts with HIRIP3. As to expression, highly expressed in brain, testis and mature epididymal spermatozoa. Weakly expressed in kidney, liver, lung, spleen and thymus (at protein level).

It is found in the nucleus. It localises to the cytoplasm. It catalyses the reaction L-seryl-[protein] + ATP = O-phospho-L-seryl-[protein] + ADP + H(+). The catalysed reaction is L-threonyl-[protein] + ATP = O-phospho-L-threonyl-[protein] + ADP + H(+). Its activity is regulated as follows. Constitutively active protein kinase whose activity is not directly affected by phosphorylation. Seems to be regulated by level of expression and localization. Its function is as follows. Catalytic subunit of a constitutively active serine/threonine-protein kinase complex that phosphorylates a large number of substrates containing acidic residues C-terminal to the phosphorylated serine or threonine. Regulates numerous cellular processes, such as cell cycle progression, apoptosis and transcription, as well as viral infection. May act as a regulatory node which integrates and coordinates numerous signals leading to an appropriate cellular response. During mitosis, functions as a component of the p53/TP53-dependent spindle assembly checkpoint (SAC) that maintains cyclin-B-CDK1 activity and G2 arrest in response to spindle damage. Also required for p53/TP53-mediated apoptosis, phosphorylating 'Ser-392' of p53/TP53 following UV irradiation. Phosphorylates a number of DNA repair proteins in response to DNA damage, such as MDC1, RAD9A, RAD51 and HTATSF1, promoting their recruitment to DNA damage sites. Can also negatively regulate apoptosis. Phosphorylates the caspases CASP9 and CASP2 and the apoptotic regulator NOL3. Phosphorylation protects CASP9 from cleavage and activation by CASP8, and inhibits the dimerization of CASP2 and activation of CASP8. Regulates transcription by direct phosphorylation of RNA polymerases I, II, III and IV. Also phosphorylates and regulates numerous transcription factors including NF-kappa-B, STAT1, CREB1, IRF1, IRF2, ATF1, SRF, MAX, JUN, FOS, MYC and MYB. Phosphorylates Hsp90 and its co-chaperones FKBP4 and CDC37, which is essential for chaperone function. Regulates Wnt signaling by phosphorylating CTNNB1 and the transcription factor LEF1. Acts as an ectokinase that phosphorylates several extracellular proteins. May phosphorylate histone H2A on 'Ser-1'. This chain is Casein kinase II subunit alpha' (Csnk2a2), found in Mus musculus (Mouse).